The primary structure comprises 414 residues: Probable uracil permease (414 aa).

At Met-1 to Ser-14 the chain is on the cytoplasmic side. Residues Lys-15–Leu-38 form a helical membrane-spanning segment. At Ile-39–Leu-42 the chain is on the periplasmic side. Residues Asp-43–Thr-62 traverse the membrane as a helical segment. Over Gly-63–Gln-65 the chain is Cytoplasmic. The chain crosses the membrane as a discontinuously helical span at residues Val-66–Tyr-82. Phe-74 serves as a coordination point for uracil. Residues Gly-83–Thr-91 are Periplasmic-facing. The helical transmembrane segment at Thr-92–Leu-112 threads the bilayer. At Arg-113 to Pro-124 the chain is on the cytoplasmic side. A helical membrane pass occupies residues Val-125–Ser-146. Over Leu-147–Tyr-155 the chain is Periplasmic. A helical transmembrane segment spans residues Asn-156–Ser-171. Over Val-172 to Gly-178 the chain is Cytoplasmic. A helical membrane pass occupies residues Leu-179 to Leu-199. The Periplasmic segment spans residues Gly-200–Asn-224. A helical membrane pass occupies residues Leu-225–Ala-248. A uracil-binding site is contributed by Glu-241. Residues Ile-249 to Pro-261 are Cytoplasmic-facing. A helical transmembrane segment spans residues Gly-262–Gly-281. A discontinuously helical membrane pass occupies residues Gly-282–Thr-298. Glu-290 contacts uracil. The Cytoplasmic segment spans residues Arg-299–Phe-301. A helical membrane pass occupies residues Asn-302–Cys-319. Topologically, residues Gly-320 to Ile-332 are periplasmic. Residues Val-333–Ile-354 form a helical membrane-spanning segment. Residues Arg-355–Asn-365 are Cytoplasmic-facing. Positions Leu-366–Ile-401 form an intramembrane region, discontinuously helical. Over Leu-402–Glu-414 the chain is Cytoplasmic.

The protein belongs to the nucleobase:cation symporter-2 (NCS2) (TC 2.A.40) family.

It localises to the cell inner membrane. The catalysed reaction is uracil(in) + H(+)(in) = uracil(out) + H(+)(out). Transport of uracil in the cell. In Haemophilus influenzae (strain ATCC 51907 / DSM 11121 / KW20 / Rd), this protein is Probable uracil permease (uraA).